Here is a 404-residue protein sequence, read N- to C-terminus: Cysteine desulfurase IscS (404 aa).

Pyridoxal 5'-phosphate contacts are provided by residues 75–76 (AT), asparagine 155, glutamine 183, and 203–205 (SAH). Lysine 206 carries the N6-(pyridoxal phosphate)lysine modification. A pyridoxal 5'-phosphate-binding site is contributed by threonine 243. Cysteine 328 serves as the catalytic Cysteine persulfide intermediate. Cysteine 328 lines the [2Fe-2S] cluster pocket.

This sequence belongs to the class-V pyridoxal-phosphate-dependent aminotransferase family. NifS/IscS subfamily. Homodimer. Forms a heterotetramer with IscU, interacts with other sulfur acceptors. Pyridoxal 5'-phosphate serves as cofactor.

The protein resides in the cytoplasm. The catalysed reaction is (sulfur carrier)-H + L-cysteine = (sulfur carrier)-SH + L-alanine. The protein operates within cofactor biosynthesis; iron-sulfur cluster biosynthesis. Functionally, master enzyme that delivers sulfur to a number of partners involved in Fe-S cluster assembly, tRNA modification or cofactor biosynthesis. Catalyzes the removal of elemental sulfur atoms from cysteine to produce alanine. Functions as a sulfur delivery protein for Fe-S cluster synthesis onto IscU, an Fe-S scaffold assembly protein, as well as other S acceptor proteins. In Shewanella woodyi (strain ATCC 51908 / MS32), this protein is Cysteine desulfurase IscS.